The sequence spans 127 residues: Basic leucine zipper transcriptional factor ATF-like 3 (127 aa).

Residues 1–72 (MSQGLPAAGS…LHEEYESLEQ (72 aa)) are disordered. Phosphoserine occurs at positions 2 and 31. Positions 35–98 (DDRKVRRREK…KHLTEALKEH (64 aa)) constitute a bZIP domain. Residues 37–62 (RKVRRREKNRVAAQRSRKKQTQKADK) form a basic motif region. Basic and acidic residues predominate over residues 58 to 67 (QKADKLHEEY). Positions 63 to 91 (LHEEYESLEQENTMLRREIGKLTEELKHL) are leucine-zipper.

This sequence belongs to the bZIP family. As to quaternary structure, heterodimer; heterodimerizes with JUN family proteins. Interacts with JUN.

The protein resides in the nucleus. Its function is as follows. AP-1 family transcription factor that controls the differentiation of CD8(+) thymic conventional dendritic cells in the immune system. Required for development of CD8-alpha(+) classical dendritic cells (cDCs) and related CD103(+) dendritic cells that cross-present antigens to CD8 T-cells and produce interleukin-12 (IL12) in response to pathogens. Acts via the formation of a heterodimer with JUN family proteins that recognizes and binds DNA sequence 5'-TGA[CG]TCA-3' and regulates expression of target genes. The chain is Basic leucine zipper transcriptional factor ATF-like 3 (BATF3) from Homo sapiens (Human).